The chain runs to 722 residues: Disintegrin and metalloproteinase domain-containing protein 21 (722 aa).

The N-terminal stretch at 1 to 31 is a signal peptide; the sequence is MAVDGTLVYIRVTLLLLWLGVFLSISGYCQA. The propeptide occupies 32-196; the sequence is GPSQHFTSPE…FEEAENSALE (165 aa). An N-linked (GlcNAc...) asparagine glycan is attached at N164. The Cysteine switch motif lies at 171–178; sequence MRCGLTEK. A Zn(2+)-binding site is contributed by C173. The Extracellular portion of the chain corresponds to 197–681; it reads PKSAGDWWTH…DSGPASAKRG (485 aa). The 191-residue stretch at 208–398 folds into the Peptidase M12B domain; it reads WFLELVVVVN…NQGSCLHNPP (191 aa). N227 carries an N-linked (GlcNAc...) asparagine glycan. 3 disulfides stabilise this stretch: C316–C393, C356–C378, and C358–C363. H341 is a binding site for Zn(2+). The active site involves E342. Zn(2+) is bound by residues H345 and H351. 5 N-linked (GlcNAc...) asparagine glycosylation sites follow: N377, N437, N478, N546, and N600. Residues 406–492 form the Disintegrin domain; the sequence is LKRCGNGVVE…QCPEDRYVQD (87 aa). Cysteines 464 and 484 form a disulfide. Disulfide bonds link C634-C645, C639-C651, and C653-C662. In terms of domain architecture, EGF-like spans 634 to 663; sequence CLPETCNMKGICNNKHHCHCGYGWSPPYCQ. A helical membrane pass occupies residues 682 to 702; it reads VFLPLIVIPSLSVLTFLFTVG. Residues 703 to 722 are Cytoplasmic-facing; it reads LLMYLRQCSGPKETKAHSSG.

Zn(2+) is required as a cofactor. Post-translationally, has no obvious cleavage site for furin endopeptidase, suggesting that the proteolytic processing is regulated.

Its subcellular location is the membrane. In terms of biological role, may be involved in sperm maturation and/or fertilization. May also be involved in epithelia functions associated with establishing and maintaining gradients of ions or nutrients. This Homo sapiens (Human) protein is Disintegrin and metalloproteinase domain-containing protein 21 (ADAM21).